The primary structure comprises 287 residues: ATP synthase gamma chain (287 aa).

Belongs to the ATPase gamma chain family. As to quaternary structure, F-type ATPases have 2 components, CF(1) - the catalytic core - and CF(0) - the membrane proton channel. CF(1) has five subunits: alpha(3), beta(3), gamma(1), delta(1), epsilon(1). CF(0) has three main subunits: a, b and c.

It is found in the cell inner membrane. In terms of biological role, produces ATP from ADP in the presence of a proton gradient across the membrane. The gamma chain is believed to be important in regulating ATPase activity and the flow of protons through the CF(0) complex. The polypeptide is ATP synthase gamma chain (Xanthomonas campestris pv. campestris (strain B100)).